A 291-amino-acid polypeptide reads, in one-letter code: Ribosome maturation factor RimP (291 aa).

The segment at 188 to 291 is disordered; sequence ERGLGEDEEF…GGKPKAKETH (104 aa). A compositionally biased stretch (acidic residues) spans 193–211; the sequence is EDEEFEDDADEVFEGDEAD. Composition is skewed to basic and acidic residues over residues 212-237 and 245-254; these read EKAAKDAANAERANAKKAADKAEKRA and AKSEKAEKSQ.

This sequence belongs to the RimP family.

The protein localises to the cytoplasm. Its function is as follows. Required for maturation of 30S ribosomal subunits. This chain is Ribosome maturation factor RimP, found in Azorhizobium caulinodans (strain ATCC 43989 / DSM 5975 / JCM 20966 / LMG 6465 / NBRC 14845 / NCIMB 13405 / ORS 571).